The chain runs to 276 residues: Secreted RxLR effector protein 150 (276 aa).

Positions 1–18 (MRNIAFLIGLFFIGYSSC) are cleaved as a signal peptide. Residues 49 to 64 (RTLQADDRERILAEER) carry the RxLR-dEER motif.

It belongs to the RxLR effector family.

It is found in the secreted. The protein resides in the host nucleus. It localises to the host cytoplasm. Its function is as follows. Secreted effector that partially suppresses the host cell death induced by cell death-inducing proteins. The protein is Secreted RxLR effector protein 150 of Plasmopara viticola (Downy mildew of grapevine).